The chain runs to 54 residues: UPF0391 membrane protein RC1_1636 (54 aa).

2 helical membrane passes run 3–23 and 30–50; these read YWAL…FGGI and IAQI…IMGL.

It belongs to the UPF0391 family.

It is found in the cell membrane. The polypeptide is UPF0391 membrane protein RC1_1636 (Rhodospirillum centenum (strain ATCC 51521 / SW)).